A 427-amino-acid chain; its full sequence is Glutamyl-tRNA reductase (427 aa).

Residues 49–52 (TCNR), S105, 110–112 (EPQ), and Q116 each bind substrate. C50 acts as the Nucleophile in catalysis. 185–190 (AAGEMN) contacts NADP(+).

It belongs to the glutamyl-tRNA reductase family. In terms of assembly, homodimer.

It catalyses the reaction (S)-4-amino-5-oxopentanoate + tRNA(Glu) + NADP(+) = L-glutamyl-tRNA(Glu) + NADPH + H(+). It participates in porphyrin-containing compound metabolism; protoporphyrin-IX biosynthesis; 5-aminolevulinate from L-glutamyl-tRNA(Glu): step 1/2. Catalyzes the NADPH-dependent reduction of glutamyl-tRNA(Glu) to glutamate 1-semialdehyde (GSA). In Acinetobacter baumannii (strain AB307-0294), this protein is Glutamyl-tRNA reductase.